The sequence spans 178 residues: Stathmin-2-A (178 aa).

Residues 38-178 (DDMEIKQLNK…RNKEQLELSG (141 aa)) form the SLD domain. Residues 75 to 178 (KKKDVSLGEI…RNKEQLELSG (104 aa)) are a coiled coil.

It belongs to the stathmin family. Nervous tissue.

It is found in the cytoplasm. The protein resides in the membrane. Its subcellular location is the cell projection. It localises to the lamellipodium. This is Stathmin-2-A (stmn2-a) from Xenopus laevis (African clawed frog).